A 157-amino-acid chain; its full sequence is Glycine-rich RNA-binding, abscisic acid-inducible protein (157 aa).

The RRM domain maps to 8 to 86; sequence YRCFVGGLAW…RNITVNQAQS (79 aa). Residues 82–157 are disordered; it reads NQAQSRGGGG…YGGGGGGWRD (76 aa). The span at 87 to 157 shows a compositional bias: gly residues; it reads RGGGGGGGGY…YGGGGGGWRD (71 aa).

In terms of biological role, possibly has a role in RNA transcription or processing during stress. The polypeptide is Glycine-rich RNA-binding, abscisic acid-inducible protein (RAB15) (Zea mays (Maize)).